Reading from the N-terminus, the 192-residue chain is Xanthine phosphoribosyltransferase (192 aa).

The xanthine site is built by leucine 20 and asparagine 27. A 5-phospho-alpha-D-ribose 1-diphosphate-binding site is contributed by 128-132; the sequence is ANGDA. A xanthine-binding site is contributed by lysine 156.

The protein belongs to the purine/pyrimidine phosphoribosyltransferase family. Xpt subfamily. As to quaternary structure, homodimer.

The protein resides in the cytoplasm. It catalyses the reaction XMP + diphosphate = xanthine + 5-phospho-alpha-D-ribose 1-diphosphate. The protein operates within purine metabolism; XMP biosynthesis via salvage pathway; XMP from xanthine: step 1/1. Its function is as follows. Converts the preformed base xanthine, a product of nucleic acid breakdown, to xanthosine 5'-monophosphate (XMP), so it can be reused for RNA or DNA synthesis. The sequence is that of Xanthine phosphoribosyltransferase from Staphylococcus aureus (strain MRSA252).